A 373-amino-acid polypeptide reads, in one-letter code: MASQNPNLAALSAAGVSVWLDDLSRDRLRSGNLQELIDTKSVVGVTTNPSIFQKALSEGHDYDAQVAELAERGADVDATIRTVTTDDVRNACDVLAPRWEASGGVDGRVSIEVDPRLAHETDKTIQQAVELWKIVDRPNLLIKIPATKAGLPAIAAVLAEGISVNVTLIFSVDRHRGVMDAYLTGMEKAAQAGHDLSKIHSVASFFVSRVDTEIDNRLEQIGSAEALALRGQAGVANARLAYAAYQEVFEGDARYQALKERGARVQRPLWASTGVKNPDYSDTLYVTELVAPHTVNTMPEKTLDAVADHGVVKGDSITGTSGDAQQVFDKLEAIGIDLSDVFDVLESEGVEKFEASWKELLDATQAQLDALAK.

Lys143 functions as the Schiff-base intermediate with substrate in the catalytic mechanism.

This sequence belongs to the transaldolase family. Type 2 subfamily.

Its subcellular location is the cytoplasm. It catalyses the reaction D-sedoheptulose 7-phosphate + D-glyceraldehyde 3-phosphate = D-erythrose 4-phosphate + beta-D-fructose 6-phosphate. The protein operates within carbohydrate degradation; pentose phosphate pathway; D-glyceraldehyde 3-phosphate and beta-D-fructose 6-phosphate from D-ribose 5-phosphate and D-xylulose 5-phosphate (non-oxidative stage): step 2/3. In terms of biological role, transaldolase is important for the balance of metabolites in the pentose-phosphate pathway. The protein is Transaldolase of Mycobacterium marinum (strain ATCC BAA-535 / M).